A 158-amino-acid polypeptide reads, in one-letter code: uncharacterized protein (158 aa).

This is an uncharacterized protein from Aedes vexans (Inland floodwater mosquito).